The following is a 127-amino-acid chain: Large ribosomal subunit protein bL12 (127 aa).

Belongs to the bacterial ribosomal protein bL12 family. Homodimer. Part of the ribosomal stalk of the 50S ribosomal subunit. Forms a multimeric L10(L12)X complex, where L10 forms an elongated spine to which 2 to 4 L12 dimers bind in a sequential fashion. Binds GTP-bound translation factors.

Its function is as follows. Forms part of the ribosomal stalk which helps the ribosome interact with GTP-bound translation factors. Is thus essential for accurate translation. The chain is Large ribosomal subunit protein bL12 from Leptospira interrogans serogroup Icterohaemorrhagiae serovar copenhageni (strain Fiocruz L1-130).